A 200-amino-acid chain; its full sequence is LHFPL tetraspan subfamily member 6 protein (200 aa).

A signal peptide spans 1 to 21 (MASSLTCTGVIWALLSFLCAA). Helical transmembrane passes span 84 to 104 (ICTI…LTAL), 123 to 143 (GIQF…PLGW), and 166 to 186 (IGWA…LCTW).

This sequence belongs to the LHFP family. As to expression, pancreas, kidney, skeletal muscle, liver, lung brain, heart, colon, small intestine, uterus, testis, prostate, thymus, spleen and placenta.

It is found in the membrane. This chain is LHFPL tetraspan subfamily member 6 protein, found in Homo sapiens (Human).